The sequence spans 456 residues: Adenylyltransferase and sulfurtransferase uba4 (456 aa).

Residues Gly-101, Asp-122, 129–133 (SNLHR), Lys-146, and 161–162 (DH) each bind ATP. Zn(2+) contacts are provided by Cys-210 and Cys-213. Cys-227 acts as the Glycyl thioester intermediate; for adenylyltransferase activity in catalysis. Positions 300 and 303 each coordinate Zn(2+). A Rhodanese domain is found at 350–454 (KEKEHLLIDV…WKEQVDGSWP (105 aa)). Residue Cys-409 is the Cysteine persulfide intermediate; for sulfurtransferase activity of the active site.

This sequence in the N-terminal section; belongs to the HesA/MoeB/ThiF family. UBA4 subfamily. It depends on Zn(2+) as a cofactor.

The protein localises to the cytoplasm. It is found in the cytosol. It catalyses the reaction [molybdopterin-synthase sulfur-carrier protein]-C-terminal Gly-Gly + ATP + H(+) = [molybdopterin-synthase sulfur-carrier protein]-C-terminal Gly-Gly-AMP + diphosphate. It carries out the reaction [molybdopterin-synthase sulfur-carrier protein]-C-terminal Gly-Gly-AMP + S-sulfanyl-L-cysteinyl-[cysteine desulfurase] + AH2 = [molybdopterin-synthase sulfur-carrier protein]-C-terminal-Gly-aminoethanethioate + L-cysteinyl-[cysteine desulfurase] + A + AMP + 2 H(+). The protein operates within tRNA modification; 5-methoxycarbonylmethyl-2-thiouridine-tRNA biosynthesis. Functionally, plays a central role in 2-thiolation of mcm(5)S(2)U at tRNA wobble positions of cytosolic tRNA(Lys), tRNA(Glu) and tRNA(Gln). Also essential during biosynthesis of the molybdenum cofactor. Acts by mediating the C-terminal thiocarboxylation of sulfur carriers urm1 and mocs2a. Its N-terminus first activates urm1 and mocs2a as acyl-adenylates (-COAMP), then the persulfide sulfur on the catalytic cysteine is transferred to urm1 and mocs2a to form thiocarboxylation (-COSH) of their C-terminus. The reaction probably involves hydrogen sulfide that is generated from the persulfide intermediate and that acts as a nucleophile towards urm1 and mocs2a. Subsequently, a transient disulfide bond is formed. Does not use thiosulfate as sulfur donor; nfs1 probably acting as a sulfur donor for thiocarboxylation reactions. In Sclerotinia sclerotiorum (strain ATCC 18683 / 1980 / Ss-1) (White mold), this protein is Adenylyltransferase and sulfurtransferase uba4.